A 201-amino-acid polypeptide reads, in one-letter code: Ephrin-A4 (201 aa).

The first 25 residues, 1–25 (MRLLPLLRTVLWAAFLGSPLRGGSS), serve as a signal peptide directing secretion. Residues 26–155 (LRHVVYWNSS…RLQVSVCCKE (130 aa)) enclose the Ephrin RBD domain. Asparagine 33 carries N-linked (GlcNAc...) asparagine glycosylation. 2 cysteine pairs are disulfide-bonded: cysteine 58–cysteine 99 and cysteine 86–cysteine 144. A lipid anchor (GPI-anchor amidated serine) is attached at serine 170. Residues 171–201 (GTSGWRGGDTPSPLCLLLLLLLLILRLLRIL) constitute a propeptide, removed in mature form.

Belongs to the ephrin family. As to expression, expressed in the adult spleen, lymph node, prostate, ovary, small intestine, and colon, and in fetal heart, lung, liver and kidney. Also detected in hematopoietic cell lines.

Its subcellular location is the cell membrane. The protein resides in the secreted. In terms of biological role, cell surface GPI-bound ligand for Eph receptors, a family of receptor tyrosine kinases which are crucial for migration, repulsion and adhesion during neuronal, vascular and epithelial development. Binds promiscuously Eph receptors residing on adjacent cells, leading to contact-dependent bidirectional signaling into neighboring cells. May play a role in the interaction between activated B-lymphocytes and dendritic cells in tonsils. This is Ephrin-A4 (EFNA4) from Homo sapiens (Human).